Reading from the N-terminus, the 268-residue chain is Eukaryotic translation initiation factor 3 subunit J (268 aa).

Disordered regions lie at residues 1 to 117 (MTPS…DLKH) and 219 to 242 (NEKM…KTKV). The segment covering 26–44 (DEEDEEVLDSWDAAEDSEV) has biased composition (acidic residues). Positions 40-95 (EDSEVEREKAAKAAEAKAKAEAEAAAKKKSKAQRIEEHKAERRKNAEADSEEDEDE) form a coiled coil. Composition is skewed to basic and acidic residues over residues 45 to 65 (EREK…EAAA) and 72 to 86 (QRIE…KNAE). Acidic residues predominate over residues 87 to 99 (ADSEEDEDEDEDE). 2 stretches are compositionally biased toward basic and acidic residues: residues 100 to 117 (AEKR…DLKH) and 220 to 232 (EKMR…DKGS).

Belongs to the eIF-3 subunit J family. In terms of assembly, component of the eukaryotic translation initiation factor 3 (eIF-3) complex.

The protein resides in the cytoplasm. Its function is as follows. Component of the eukaryotic translation initiation factor 3 (eIF-3) complex, which is involved in protein synthesis of a specialized repertoire of mRNAs and, together with other initiation factors, stimulates binding of mRNA and methionyl-tRNAi to the 40S ribosome. The eIF-3 complex specifically targets and initiates translation of a subset of mRNAs involved in cell proliferation. The sequence is that of Eukaryotic translation initiation factor 3 subunit J (hcr1) from Aspergillus clavatus (strain ATCC 1007 / CBS 513.65 / DSM 816 / NCTC 3887 / NRRL 1 / QM 1276 / 107).